The sequence spans 187 residues: GTP cyclohydrolase 1 (187 aa).

Positions 76, 79, and 148 each coordinate Zn(2+).

It belongs to the GTP cyclohydrolase I family. As to quaternary structure, toroid-shaped homodecamer, composed of two pentamers of five dimers.

It carries out the reaction GTP + H2O = 7,8-dihydroneopterin 3'-triphosphate + formate + H(+). It participates in cofactor biosynthesis; 7,8-dihydroneopterin triphosphate biosynthesis; 7,8-dihydroneopterin triphosphate from GTP: step 1/1. In Streptococcus agalactiae serotype V (strain ATCC BAA-611 / 2603 V/R), this protein is GTP cyclohydrolase 1.